A 200-amino-acid polypeptide reads, in one-letter code: LexA repressor (200 aa).

Residues 29-48 (IRDIARAFRITPRGAIVHLN) constitute a DNA-binding region (H-T-H motif). Residues serine 120 and lysine 158 each act as for autocatalytic cleavage activity in the active site.

It belongs to the peptidase S24 family. As to quaternary structure, homodimer.

It carries out the reaction Hydrolysis of Ala-|-Gly bond in repressor LexA.. Functionally, represses a number of genes involved in the response to DNA damage (SOS response), including recA and lexA. In the presence of single-stranded DNA, RecA interacts with LexA causing an autocatalytic cleavage which disrupts the DNA-binding part of LexA, leading to derepression of the SOS regulon and eventually DNA repair. The protein is LexA repressor of Pseudothermotoga lettingae (strain ATCC BAA-301 / DSM 14385 / NBRC 107922 / TMO) (Thermotoga lettingae).